Reading from the N-terminus, the 515-residue chain is 2,3-bisphosphoglycerate-independent phosphoglycerate mutase (515 aa).

Residues aspartate 14 and serine 64 each contribute to the Mn(2+) site. Serine 64 acts as the Phosphoserine intermediate in catalysis. Substrate is bound by residues histidine 125, 155–156, arginine 187, arginine 193, 263–266, and lysine 337; these read RD and RADR. The Mn(2+) site is built by aspartate 404, histidine 408, aspartate 445, histidine 446, and histidine 464.

This sequence belongs to the BPG-independent phosphoglycerate mutase family. As to quaternary structure, monomer. Mn(2+) serves as cofactor.

It catalyses the reaction (2R)-2-phosphoglycerate = (2R)-3-phosphoglycerate. It participates in carbohydrate degradation; glycolysis; pyruvate from D-glyceraldehyde 3-phosphate: step 3/5. Catalyzes the interconversion of 2-phosphoglycerate and 3-phosphoglycerate. The protein is 2,3-bisphosphoglycerate-independent phosphoglycerate mutase of Pseudomonas aeruginosa (strain UCBPP-PA14).